A 227-amino-acid polypeptide reads, in one-letter code: DNA utilization protein YhgH (227 aa).

It belongs to the ComF/GntX family.

Required for the use of extracellular DNA as a nutrient. Has been suggested to be involved in gluconate metabolism. The polypeptide is DNA utilization protein YhgH (Escherichia coli (strain K12)).